Here is a 276-residue protein sequence, read N- to C-terminus: Acyl-[acyl-carrier-protein]--UDP-N-acetylglucosamine O-acyltransferase (276 aa).

Belongs to the transferase hexapeptide repeat family. LpxA subfamily. Homotrimer.

The protein resides in the cytoplasm. It carries out the reaction a (3R)-hydroxyacyl-[ACP] + UDP-N-acetyl-alpha-D-glucosamine = a UDP-3-O-[(3R)-3-hydroxyacyl]-N-acetyl-alpha-D-glucosamine + holo-[ACP]. It participates in glycolipid biosynthesis; lipid IV(A) biosynthesis; lipid IV(A) from (3R)-3-hydroxytetradecanoyl-[acyl-carrier-protein] and UDP-N-acetyl-alpha-D-glucosamine: step 1/6. In terms of biological role, involved in the biosynthesis of lipid A, a phosphorylated glycolipid that anchors the lipopolysaccharide to the outer membrane of the cell. The sequence is that of Acyl-[acyl-carrier-protein]--UDP-N-acetylglucosamine O-acyltransferase from Synechocystis sp. (strain ATCC 27184 / PCC 6803 / Kazusa).